We begin with the raw amino-acid sequence, 457 residues long: Bifunctional protein GlmU (457 aa).

Residues 1–232 (MNNLAAVILA…PAEVMGINDR (232 aa)) are pyrophosphorylase. UDP-N-acetyl-alpha-D-glucosamine contacts are provided by residues 9–12 (LAAG), lysine 23, glutamine 75, and 80–81 (GT). Residue aspartate 105 participates in Mg(2+) binding. Residues glycine 142, glutamate 157, asparagine 172, and asparagine 230 each coordinate UDP-N-acetyl-alpha-D-glucosamine. Asparagine 230 contributes to the Mg(2+) binding site. The linker stretch occupies residues 233–253 (AQLAEAGQLLRGRINKALMLD). The segment at 254-457 (GTTLIDPQTT…NKEGWKLKKK (204 aa)) is N-acetyltransferase. Positions 336 and 354 each coordinate UDP-N-acetyl-alpha-D-glucosamine. Residue histidine 366 is the Proton acceptor of the active site. UDP-N-acetyl-alpha-D-glucosamine contacts are provided by tyrosine 369 and asparagine 380. Acetyl-CoA-binding positions include 389 to 390 (NY), serine 408, alanine 426, and arginine 443.

It in the N-terminal section; belongs to the N-acetylglucosamine-1-phosphate uridyltransferase family. The protein in the C-terminal section; belongs to the transferase hexapeptide repeat family. In terms of assembly, homotrimer. It depends on Mg(2+) as a cofactor.

It is found in the cytoplasm. The catalysed reaction is alpha-D-glucosamine 1-phosphate + acetyl-CoA = N-acetyl-alpha-D-glucosamine 1-phosphate + CoA + H(+). It catalyses the reaction N-acetyl-alpha-D-glucosamine 1-phosphate + UTP + H(+) = UDP-N-acetyl-alpha-D-glucosamine + diphosphate. Its pathway is nucleotide-sugar biosynthesis; UDP-N-acetyl-alpha-D-glucosamine biosynthesis; N-acetyl-alpha-D-glucosamine 1-phosphate from alpha-D-glucosamine 6-phosphate (route II): step 2/2. It participates in nucleotide-sugar biosynthesis; UDP-N-acetyl-alpha-D-glucosamine biosynthesis; UDP-N-acetyl-alpha-D-glucosamine from N-acetyl-alpha-D-glucosamine 1-phosphate: step 1/1. It functions in the pathway bacterial outer membrane biogenesis; LPS lipid A biosynthesis. Its function is as follows. Catalyzes the last two sequential reactions in the de novo biosynthetic pathway for UDP-N-acetylglucosamine (UDP-GlcNAc). The C-terminal domain catalyzes the transfer of acetyl group from acetyl coenzyme A to glucosamine-1-phosphate (GlcN-1-P) to produce N-acetylglucosamine-1-phosphate (GlcNAc-1-P), which is converted into UDP-GlcNAc by the transfer of uridine 5-monophosphate (from uridine 5-triphosphate), a reaction catalyzed by the N-terminal domain. In Geotalea uraniireducens (strain Rf4) (Geobacter uraniireducens), this protein is Bifunctional protein GlmU.